The sequence spans 1127 residues: WD repeat and HMG-box DNA-binding protein 1 (1127 aa).

7 WD repeats span residues Gly-11 to Ser-50, Ser-52 to Thr-91, Arg-92 to Thr-131, Gly-134 to Val-173, Phe-184 to Thr-223, Phe-228 to Arg-267, and Glu-271 to Gln-310. Disordered stretches follow at residues Ala-811–Lys-1013 and Lys-1064–Glu-1127. Residues Gln-819 to Asp-829 are compositionally biased toward acidic residues. The segment covering Gly-846–Gln-857 has biased composition (basic and acidic residues). Residues Tyr-858–Leu-877 show a composition bias toward acidic residues. 2 stretches are compositionally biased toward polar residues: residues Thr-881–Val-891 and Ser-918–Leu-937. Residues Ser-948–Ser-960 are compositionally biased toward low complexity. Residues Lys-1013–Asp-1076 constitute a DNA-binding region (HMG box). The segment covering Asn-1087–Ser-1100 has biased composition (polar residues).

In terms of assembly, homodimer. Found in oocytes and in various other cells.

It is found in the nucleus. The protein resides in the nucleoplasm. The protein localises to the cytoplasm. In terms of biological role, core replisome component that acts as a replication initiation factor. Binds directly to the CMG complex and functions as a hub to recruit additional proteins to the replication fork. The sequence is that of WD repeat and HMG-box DNA-binding protein 1 (wdhd1) from Xenopus laevis (African clawed frog).